Consider the following 305-residue polypeptide: MSKKLTFQEIILTLQQFWNEQGCLLMQAYDTEKGAGTMSPYTFLRAIGPEPWNAAYVEPSRRPADGRYGENPNRLYQHHQFQVVMKPSPSNIQELYLESLERLGINPLEHDIRFVEDNWENPSTGSAGLGWEVWLDGMEITQFTYFQQVGGLATGPVTAEVTYGLERLASYIQEVDSVYDIEWADGVKYGEIFIQPEYEHSKYSFEVSDQDMLLENFTKFEKEAERALEEGLVHPAFDYVLKCSHTFNLLDARGAVSVTERAGYIARIRNLARVVAKTFVAERKKLGFPLLDEATRAELLKEDAE.

This sequence belongs to the class-II aminoacyl-tRNA synthetase family. As to quaternary structure, tetramer of two alpha and two beta subunits.

Its subcellular location is the cytoplasm. It catalyses the reaction tRNA(Gly) + glycine + ATP = glycyl-tRNA(Gly) + AMP + diphosphate. The chain is Glycine--tRNA ligase alpha subunit from Streptococcus suis (strain 98HAH33).